Here is a 146-residue protein sequence, read N- to C-terminus: Large ribosomal subunit protein uL16 (146 aa).

This sequence belongs to the universal ribosomal protein uL16 family. Part of the 50S ribosomal subunit.

Binds 23S rRNA and is also seen to make contacts with the A and possibly P site tRNAs. This Caulobacter sp. (strain K31) protein is Large ribosomal subunit protein uL16.